We begin with the raw amino-acid sequence, 336 residues long: Eukaryotic translation initiation factor 3 subunit I (336 aa).

5 WD repeats span residues G8–T47, G50–E91, C146–N185, E190–T229, and G287–M326.

Belongs to the eIF-3 subunit I family. In terms of assembly, component of the eukaryotic translation initiation factor 3 (eIF-3) complex.

The protein resides in the cytoplasm. Component of the eukaryotic translation initiation factor 3 (eIF-3) complex, which is involved in protein synthesis of a specialized repertoire of mRNAs and, together with other initiation factors, stimulates binding of mRNA and methionyl-tRNAi to the 40S ribosome. The eIF-3 complex specifically targets and initiates translation of a subset of mRNAs involved in cell proliferation. This chain is Eukaryotic translation initiation factor 3 subunit I (tif34), found in Emericella nidulans (strain FGSC A4 / ATCC 38163 / CBS 112.46 / NRRL 194 / M139) (Aspergillus nidulans).